A 477-amino-acid chain; its full sequence is Protoporphyrinogen oxidase (477 aa).

Residues 9–14, Trp42, 57–60, Val257, Ala449, and 454–456 each bind FAD; these read GGGISG, GPRG, and VAV.

Belongs to the protoporphyrinogen/coproporphyrinogen oxidase family. Protoporphyrinogen oxidase subfamily. In terms of assembly, monomer. Homodimer. FAD serves as cofactor.

Its subcellular location is the mitochondrion inner membrane. The enzyme catalyses protoporphyrinogen IX + 3 O2 = protoporphyrin IX + 3 H2O2. The protein operates within porphyrin-containing compound metabolism; protoporphyrin-IX biosynthesis; protoporphyrin-IX from protoporphyrinogen-IX: step 1/1. In terms of biological role, catalyzes the 6-electron oxidation of protoporphyrinogen-IX to form protoporphyrin-IX. In Macaca fascicularis (Crab-eating macaque), this protein is Protoporphyrinogen oxidase (PPOX).